The primary structure comprises 84 residues: MAIIINIDVMLAKRKMSVTELSERVGITMANLSILKNGKAKAIRLSTLEAICKALECQPGDILEYRSDEDTGFVKKKYEGSTEK.

The region spanning 7-62 is the HTH cro/C1-type domain; it reads IDVMLAKRKMSVTELSERVGITMANLSILKNGKAKAIRLSTLEAICKALECQPGDI. Positions 18-37 form a DNA-binding region, H-T-H motif; sequence VTELSERVGITMANLSILKN.

This is an uncharacterized protein from Bacillus subtilis (strain 168).